Consider the following 79-residue polypeptide: Sec-independent protein translocase protein TatA (79 aa).

A helical transmembrane segment spans residues 1–21 (MGGWSSPSHWLIILLIVVLLF). A compositionally biased stretch (basic and acidic residues) spans 52–61 (KNTQKIEENK). Residues 52-79 (KNTQKIEENKNTTNNTSADASIDKTKKA) are disordered.

This sequence belongs to the TatA/E family. In terms of assembly, the Tat system comprises two distinct complexes: a TatABC complex, containing multiple copies of TatA, TatB and TatC subunits, and a separate TatA complex, containing only TatA subunits. Substrates initially bind to the TatABC complex, which probably triggers association of the separate TatA complex to form the active translocon.

It localises to the cell inner membrane. Functionally, part of the twin-arginine translocation (Tat) system that transports large folded proteins containing a characteristic twin-arginine motif in their signal peptide across membranes. TatA could form the protein-conducting channel of the Tat system. In Campylobacter jejuni subsp. jejuni serotype O:6 (strain 81116 / NCTC 11828), this protein is Sec-independent protein translocase protein TatA.